Reading from the N-terminus, the 237-residue chain is Probable septum site-determining protein MinC (237 aa).

Belongs to the MinC family. As to quaternary structure, interacts with MinD and FtsZ.

In terms of biological role, cell division inhibitor that blocks the formation of polar Z ring septums. Rapidly oscillates between the poles of the cell to destabilize FtsZ filaments that have formed before they mature into polar Z rings. Prevents FtsZ polymerization. The polypeptide is Probable septum site-determining protein MinC (Buchnera aphidicola subsp. Acyrthosiphon pisum (strain 5A)).